The primary structure comprises 114 residues: Protein S40-2 (114 aa).

Residues 23-50 (RYTKLYNSRNDEKKGTRRHETAEKTSPV) form a disordered region. A compositionally biased stretch (basic and acidic residues) spans 31-45 (RNDEKKGTRRHETAE).

The protein belongs to the senescence regulator S40 family.

The protein localises to the cytoplasm. The protein is Protein S40-2 of Arabidopsis thaliana (Mouse-ear cress).